Here is a 1341-residue protein sequence, read N- to C-terminus: uncharacterized protein (1341 aa).

Positions 41 to 68 form a DNA-binding region, zn(2)-C6 fungal-type; sequence CLLCRRRKQRCDHKLPSCTACLKAGIKC. Low complexity-rich tracts occupy residues 72–93, 779–791, 864–906, 920–967, and 1036–1050; these read SKYS…AGTV, SNSA…SNSN, SNSS…NDNN, NHNN…GNNS, and SPSK…SSHS. 4 disordered regions span residues 72 to 100, 770 to 804, 864 to 971, and 1031 to 1116; these read SKYS…PHPV, ISSG…MPPA, SNSS…QYVR, and TMTN…NSNP. The span at 1057–1076 shows a compositional bias: polar residues; sequence MTQSPTPYPQTSNMLPQQHV. The segment covering 1078–1090 has biased composition (low complexity); the sequence is RPLPQQQREQPQQ. Residues 1091 to 1116 show a composition bias toward polar residues; that stretch reads HITSPQRFSESNFTNQLNNGMINSNP. The residue at position 1143 (S1143) is a Phosphoserine. A compositionally biased stretch (polar residues) spans 1220–1230; sequence SQEPSSLSMDK. The segment at 1220–1240 is disordered; that stretch reads SQEPSSLSMDKQQQQHQQQNM.

It is found in the nucleus. This is an uncharacterized protein from Saccharomyces cerevisiae (strain ATCC 204508 / S288c) (Baker's yeast).